Here is a 568-residue protein sequence, read N- to C-terminus: C6 finger domain transcription factor BOA13 (568 aa).

A DNA-binding region (zn(2)-C6 fungal-type) is located at residues 14–41 (CNECHASKVRCSGERTGCRRCVYNQQKC). 3 disordered regions span residues 92–114 (EANGNDLNSKPNDVPVESSEGIT), 207–278 (ATSS…HHNH), and 467–490 (RSRSLSTPSPRNTPSTSNSPFSNP). Basic and acidic residues predominate over residues 242-259 (HSDLSEKQAQHAQNDLRW). Over residues 260-274 (RSQSQSYKRPTISTQ) the composition is skewed to polar residues. The segment covering 470-490 (SLSTPSPRNTPSTSNSPFSNP) has biased composition (low complexity).

The protein localises to the nucleus. Its function is as follows. Transcription factor that probably regulates the gene clusters that mediates the biosynthesis of botcinin acid and its botcinin derivatives, acetate-derived polyketides that contribute to virulence when combined with the sesquiterpene botrydial. Botcinin acid and its derivatives have been shown to induce chlorosis and necrosis during host plant infection, but also have antifungal activities. The polypeptide is C6 finger domain transcription factor BOA13 (Botryotinia fuckeliana (strain B05.10) (Noble rot fungus)).